A 271-amino-acid polypeptide reads, in one-letter code: Formamidopyrimidine-DNA glycosylase (271 aa).

Catalysis depends on Pro2, which acts as the Schiff-base intermediate with DNA. The active-site Proton donor is Glu3. Residue Lys57 is the Proton donor; for beta-elimination activity of the active site. DNA is bound by residues His90, Arg109, and Lys150. The FPG-type zinc-finger motif lies at 235-269 (LVYGNKDKPCPKCGGKIESLIIGQRNSFFCPKCQK). Arg259 functions as the Proton donor; for delta-elimination activity in the catalytic mechanism.

Belongs to the FPG family. In terms of assembly, monomer. Zn(2+) is required as a cofactor.

The enzyme catalyses Hydrolysis of DNA containing ring-opened 7-methylguanine residues, releasing 2,6-diamino-4-hydroxy-5-(N-methyl)formamidopyrimidine.. It catalyses the reaction 2'-deoxyribonucleotide-(2'-deoxyribose 5'-phosphate)-2'-deoxyribonucleotide-DNA = a 3'-end 2'-deoxyribonucleotide-(2,3-dehydro-2,3-deoxyribose 5'-phosphate)-DNA + a 5'-end 5'-phospho-2'-deoxyribonucleoside-DNA + H(+). Its function is as follows. Involved in base excision repair of DNA damaged by oxidation or by mutagenic agents. Acts as a DNA glycosylase that recognizes and removes damaged bases. Has a preference for oxidized purines, such as 7,8-dihydro-8-oxoguanine (8-oxoG). Has AP (apurinic/apyrimidinic) lyase activity and introduces nicks in the DNA strand. Cleaves the DNA backbone by beta-delta elimination to generate a single-strand break at the site of the removed base with both 3'- and 5'-phosphates. The protein is Formamidopyrimidine-DNA glycosylase of Haemophilus influenzae (strain 86-028NP).